The following is a 122-amino-acid chain: Small ribosomal subunit protein bS6 (122 aa).

The protein belongs to the bacterial ribosomal protein bS6 family.

Its function is as follows. Binds together with bS18 to 16S ribosomal RNA. The protein is Small ribosomal subunit protein bS6 of Trichlorobacter lovleyi (strain ATCC BAA-1151 / DSM 17278 / SZ) (Geobacter lovleyi).